Consider the following 192-residue polypeptide: Potassium-transporting ATPase KdpC subunit (192 aa).

The chain crosses the membrane as a helical span at residues 7–27; sequence PLIVLFVVLAALTGLAYPAVM.

Belongs to the KdpC family. The system is composed of three essential subunits: KdpA, KdpB and KdpC.

The protein resides in the cell inner membrane. In terms of biological role, part of the high-affinity ATP-driven potassium transport (or Kdp) system, which catalyzes the hydrolysis of ATP coupled with the electrogenic transport of potassium into the cytoplasm. This subunit acts as a catalytic chaperone that increases the ATP-binding affinity of the ATP-hydrolyzing subunit KdpB by the formation of a transient KdpB/KdpC/ATP ternary complex. This Paraburkholderia xenovorans (strain LB400) protein is Potassium-transporting ATPase KdpC subunit.